We begin with the raw amino-acid sequence, 505 residues long: MSEQETRGANEAIDFNDELRNRREKLAALRQQGVAFPNDFRRDHTSDQLHEEFDAKDNQELESLNIEVSVAGRMMTRRIMGKASFVTLQDVGGRIQLYVARDSLPEGVYNDQFKKWDLGDIIGARGTLFKTQTGELSIHCTELRLLTKALRPLPDKFHGLQDQEVRYRQRYLDLIANDKSRQTFVVRSKILAAIRQFMVARGFMEVETPMMQVIPGGASARPFITHHNALDLDMYLRIAPELYLKRLVVGGFERVFEINRNFRNEGISVRHNPEFTMMELYMAYADYHDLIELTESLFRTLAQEVLGTTKVTYGEHVFDFGKPFEKLTMREAIKKYRPETDMADLDNFDAAKALAESIGITVEKSWGLGRIVTEIFDEVAEAHLIQPTFITEYPAEVSPLARRNDVNPEITDRFEFFIGGREIGNGFSELNDAEDQAERFQEQVNAKAAGDDEAMFYDEDYVTALEYGLPPTAGLGIGIDRMIMLFTNSHTIRDVILFPAMRPQK.

Residues K114 and K156 each carry the N6-acetyllysine modification. E415 and E422 together coordinate Mg(2+).

This sequence belongs to the class-II aminoacyl-tRNA synthetase family. In terms of assembly, homodimer. Mg(2+) serves as cofactor.

The protein localises to the cytoplasm. It carries out the reaction tRNA(Lys) + L-lysine + ATP = L-lysyl-tRNA(Lys) + AMP + diphosphate. This Escherichia coli O157:H7 protein is Lysine--tRNA ligase, heat inducible (lysU).